Reading from the N-terminus, the 252-residue chain is Thiamine thiazole synthase (252 aa).

NAD(+) contacts are provided by residues Ser35, 54-55 (EK), Gly62, Val126, and 152-154 (HVD). Residues Asp154 and His169 each contribute to the Fe cation site. Met217 is a binding site for NAD(+). Glycine is bound at residue Arg227.

It belongs to the THI4 family. Homooctamer; tetramer of dimers. Requires Fe(2+) as cofactor.

The catalysed reaction is hydrogen sulfide + glycine + NAD(+) = ADP-5-ethyl-4-methylthiazole-2-carboxylate + nicotinamide + 3 H2O + H(+). Its pathway is cofactor biosynthesis; thiamine diphosphate biosynthesis. In terms of biological role, involved in the biosynthesis of the thiazole moiety of thiamine. Catalyzes the conversion of NAD and glycine to adenosine diphosphate 5-(2-hydroxyethyl)-4-methylthiazole-2-carboxylate (ADT), an adenylated thiazole intermediate, using free sulfide as a source of sulfur. This is Thiamine thiazole synthase from Pyrococcus horikoshii (strain ATCC 700860 / DSM 12428 / JCM 9974 / NBRC 100139 / OT-3).